The primary structure comprises 209 residues: Orotate phosphoribosyltransferase (209 aa).

5-phospho-alpha-D-ribose 1-diphosphate contacts are provided by residues arginine 96, lysine 100, histidine 102, and 122 to 130 (EDLISTGGS). Serine 126 contacts orotate.

Belongs to the purine/pyrimidine phosphoribosyltransferase family. PyrE subfamily. In terms of assembly, homodimer. It depends on Mg(2+) as a cofactor.

It catalyses the reaction orotidine 5'-phosphate + diphosphate = orotate + 5-phospho-alpha-D-ribose 1-diphosphate. It participates in pyrimidine metabolism; UMP biosynthesis via de novo pathway; UMP from orotate: step 1/2. Catalyzes the transfer of a ribosyl phosphate group from 5-phosphoribose 1-diphosphate to orotate, leading to the formation of orotidine monophosphate (OMP). The sequence is that of Orotate phosphoribosyltransferase from Streptococcus gordonii (strain Challis / ATCC 35105 / BCRC 15272 / CH1 / DL1 / V288).